The chain runs to 70 residues: Conotoxin ArMKLT2-0112 (70 aa).

The N-terminal stretch at 1–22 (MKLTCVLIIAVLFLTACQLTTG) is a signal peptide. Positions 23–40 (EQKDHALRSTDKNSKLTR) are excised as a propeptide. Glutamine 41 is modified (pyrrolidone carboxylic acid). Cystine bridges form between cysteine 42–cysteine 56, cysteine 49–cysteine 60, and cysteine 55–cysteine 67.

It belongs to the conotoxin O1 superfamily. In terms of tissue distribution, expressed by the venom duct.

It is found in the secreted. The chain is Conotoxin ArMKLT2-0112 from Conus arenatus (Sand-dusted cone).